A 552-amino-acid chain; its full sequence is Histone deacetylase 15 (552 aa).

A RanBP2-type zinc finger spans residues Glu-86 to Ser-115. A histone deacetylase region spans residues Ser-149–Gly-462. His-277 serves as the catalytic Proton donor/acceptor. Zn(2+) is bound by residues Asp-313, His-315, and Asp-404.

Belongs to the histone deacetylase family. HD type 2 subfamily. In terms of assembly, interacts with PIF3 in the dark. Interacts with HY5. Interacts with MYB96. Forms homotetramers. The cofactor is Zn(2+). Expressed in stems, leaves, flowers, siliques and mature seeds.

The protein resides in the nucleus. It localises to the cytoplasm. The enzyme catalyses N(6)-acetyl-L-lysyl-[histone] + H2O = L-lysyl-[histone] + acetate. Inhibited by trichostatin A (TSA), a well-known histone deacetylase inhibitor. Responsible for the deacetylation of lysine residues on the N-terminal part of the core histones (H2A, H2B, H3 and H4). Histone deacetylation gives a tag for epigenetic repression and plays an important role in transcriptional regulation, cell cycle progression and developmental events. Histone deacetylases act via the formation of large multiprotein complexes. Represses chlorophyll biosynthesis and photosynthesis in the dark. Is recruited by PIF3 to the promoters of chlorophyll biosynthetic and photosynthetic genes, and represses their transcription by histone deacetylation. Involved in the repression of hypocotyl cell elongation to promote photomorphogenesis. Is recruited by HY5 to the promoters of a subset of cell wall organization and auxin signaling-related genes, and represses gene expression by decreasing the levels of histone H4 acetylation in a light-dependent manner. Promotes abscisic acid (ABA) signaling. Is recruited by MYB96 to the promoters of a subset of Rho GTPase (ROP) genes, which repress ABA signaling at the early stages of signal transduction. Represses ROP expression by removing acetyl groups of histone H3 and H4 from the cognate regions, particularly in the presence of ABA. Represses the plant response to elevated ambient temperature by directly repressing warm temperature-responsive genes. This chain is Histone deacetylase 15, found in Arabidopsis thaliana (Mouse-ear cress).